The sequence spans 177 residues: Protein-export protein SecB (177 aa).

It belongs to the SecB family. Homotetramer, a dimer of dimers. One homotetramer interacts with 1 SecA dimer.

Its subcellular location is the cytoplasm. Its function is as follows. One of the proteins required for the normal export of preproteins out of the cell cytoplasm. It is a molecular chaperone that binds to a subset of precursor proteins, maintaining them in a translocation-competent state. It also specifically binds to its receptor SecA. The protein is Protein-export protein SecB of Ehrlichia canis (strain Jake).